The chain runs to 500 residues: Probable malate:quinone oxidoreductase (500 aa).

This sequence belongs to the MQO family. Requires FAD as cofactor.

The catalysed reaction is (S)-malate + a quinone = a quinol + oxaloacetate. It functions in the pathway carbohydrate metabolism; tricarboxylic acid cycle; oxaloacetate from (S)-malate (quinone route): step 1/1. The sequence is that of Probable malate:quinone oxidoreductase from Corynebacterium glutamicum (strain R).